The sequence spans 307 residues: Isethionate sulfite-lyase activating enzyme (307 aa).

One can recognise a Radical SAM core domain in the interval 22–307 (HDGPGIRTVV…EAVVAQTADS (286 aa)). Cys36, Cys40, Cys43, Cys62, Cys68, Cys71, Cys75, Cys95, Cys98, Cys102, and Cys106 together coordinate [4Fe-4S] cluster. 42-44 (WCS) is an S-adenosyl-L-methionine binding site. 2 consecutive 4Fe-4S ferredoxin-type domains span residues 53-85 (VELAYNTGRCLTLAKCVRCVEICTAGAISRAED) and 86-117 (DTISIDRALCNDCEQLCSGACPSNALITYGAH). Residues Gly146, 195–197 (DIK), and His268 contribute to the S-adenosyl-L-methionine site.

Belongs to the organic radical-activating enzymes family. In terms of assembly, monomer. It depends on [4Fe-4S] cluster as a cofactor.

It catalyses the reaction glycyl-[protein] + reduced [flavodoxin] + S-adenosyl-L-methionine = glycin-2-yl radical-[protein] + semiquinone [flavodoxin] + 5'-deoxyadenosine + L-methionine + H(+). The protein operates within organosulfur degradation; alkanesulfonate degradation. Functionally, involved in an anaerobic respiration pathway that converts the sulfonate isethionate (2-hydroxyethanesulfonate) to ammonia, acetate and sulfide. Catalyzes activation of the isethionate sulfite-lyase IseG under anaerobic conditions by generation of an organic free radical on a glycine residue, via a homolytic cleavage of S-adenosyl-L-methionine (SAM). This is Isethionate sulfite-lyase activating enzyme from Nitratidesulfovibrio vulgaris (strain ATCC 29579 / DSM 644 / CCUG 34227 / NCIMB 8303 / VKM B-1760 / Hildenborough) (Desulfovibrio vulgaris).